The chain runs to 722 residues: Polyribonucleotide nucleotidyltransferase (722 aa).

Residues Asp498 and Asp504 each contribute to the Mg(2+) site. Positions 565–624 (PQFHTMKIDPDKIRDIIGKGGATIRSITEETGASIDIDDNGTIKIYADDGDGMQAAIARI) constitute a KH domain. Positions 634-702 (GAVYQGKVVR…QRGRIKLSIK (69 aa)) constitute an S1 motif domain.

Belongs to the polyribonucleotide nucleotidyltransferase family. Component of the RNA degradosome, which is a multiprotein complex involved in RNA processing and mRNA degradation. Mg(2+) is required as a cofactor.

Its subcellular location is the cytoplasm. The enzyme catalyses RNA(n+1) + phosphate = RNA(n) + a ribonucleoside 5'-diphosphate. Involved in mRNA degradation. Catalyzes the phosphorolysis of single-stranded polyribonucleotides processively in the 3'- to 5'-direction. This chain is Polyribonucleotide nucleotidyltransferase, found in Saccharophagus degradans (strain 2-40 / ATCC 43961 / DSM 17024).